Consider the following 87-residue polypeptide: Large ribosomal subunit protein bL27 (87 aa).

Positions 1–21 (MAHKKAGGSSRNGRDSESKRL) are disordered.

Belongs to the bacterial ribosomal protein bL27 family.

The polypeptide is Large ribosomal subunit protein bL27 (Burkholderia ambifaria (strain MC40-6)).